A 363-amino-acid polypeptide reads, in one-letter code: Flagellar P-ring protein (363 aa).

The first 20 residues, 1-20 (MKKLTLVLFGMLFLASSAHA), serve as a signal peptide directing secretion.

Belongs to the FlgI family. In terms of assembly, the basal body constitutes a major portion of the flagellar organelle and consists of four rings (L,P,S, and M) mounted on a central rod.

Its subcellular location is the periplasm. The protein resides in the bacterial flagellum basal body. In terms of biological role, assembles around the rod to form the L-ring and probably protects the motor/basal body from shearing forces during rotation. This chain is Flagellar P-ring protein, found in Vibrio atlanticus (strain LGP32) (Vibrio splendidus (strain Mel32)).